The primary structure comprises 306 residues: Follistatin-related protein 1 (306 aa).

Residues 1 to 18 form the signal peptide; the sequence is MWKRWLALALVAVAWVRA. The 24-residue stretch at 28–51 folds into the Follistatin-like domain; sequence ICANVFCGAGRECAVTEKGEPTCL. 5 disulfides stabilise this stretch: C29-C40, C34-C50, C52-C82, C56-C75, and C64-C96. A Kazal-like domain is found at 46 to 98; sequence GEPTCLCIEQCKPHKRPVCGSNGKTYLNHCELHRDACLTGSKIQVDYDGHCKE. An N-linked (GlcNAc...) asparagine glycan is attached at N142. Residues 142–176 form the EF-hand 1 domain; that stretch reads NYSEILDKYFKNFDNGDSRLDSSEFLKFVEQNETA. A Phosphoserine modification is found at S163. 2 N-linked (GlcNAc...) asparagine glycosylation sites follow: N173 and N178. In terms of domain architecture, EF-hand 2 spans 191–226; it reads LRGLCVDALIELSDENADWKLSFQEFLKCLNPSFNP. Positions 231–285 constitute a VWFC domain; that stretch reads CALEDETYADGAETEVDCNRCVCACGNWVCTAMTCDGKNQKGAQTQTEEEMTRYV.

Homodimer. Interacts with SCN10A. Interacts with DIP2A; DIP2A may act as a cell surface receptor for FSTL1. Interacts with BMP4. Interacts with CD14; this interaction promotes TL4-mediated signaling cascade.

The protein localises to the secreted. Functionally, secreted glycoprotein that is involved in various physiological processes, such as angiogenesis, regulation of the immune response, cell proliferation and differentiation. Plays a role in the development of the central nervous system, skeletal system, lungs, and ureter. Promotes endothelial cell survival, migration and differentiation into network structures in an AKT-dependent manner. Also promotes survival of cardiac myocytes. Initiates various signaling cascades by activating different receptors on the cell surface such as DIP2A, TLR4 or BMP receptors. The sequence is that of Follistatin-related protein 1 (FSTL1) from Pongo abelii (Sumatran orangutan).